The primary structure comprises 397 residues: Diphosphomevalonate decarboxylase (397 aa).

Residues 19 to 22, arginine 74, 153 to 158, and threonine 209 contribute to the (R)-5-diphosphomevalonate site; these read YWGK and SGSACR. Positions 378–397 are disordered; sequence GPGPQDTKSSLIDPETGLPR.

Belongs to the diphosphomevalonate decarboxylase family. Homodimer.

The catalysed reaction is (R)-5-diphosphomevalonate + ATP = isopentenyl diphosphate + ADP + phosphate + CO2. It participates in isoprenoid biosynthesis; isopentenyl diphosphate biosynthesis via mevalonate pathway; isopentenyl diphosphate from (R)-mevalonate: step 3/3. Functionally, diphosphomevalonate decarboxylase; part of the second module of ergosterol biosynthesis pathway that includes the middle steps of the pathway. The second module is carried out in the vacuole and involves the formation of farnesyl diphosphate, which is also an important intermediate in the biosynthesis of ubiquinone, dolichol, heme and prenylated proteins. Activity by the mevalonate kinase ERG12 first converts mevalonate into 5-phosphomevalonate. 5-phosphomevalonate is then further converted to 5-diphosphomevalonate by the phosphomevalonate kinase ERG8. The diphosphomevalonate decarboxylase MVD1/ERG19 then produces isopentenyl diphosphate. The isopentenyl-diphosphate delta-isomerase IDI1 then catalyzes the 1,3-allylic rearrangement of the homoallylic substrate isopentenyl (IPP) to its highly electrophilic allylic isomer, dimethylallyl diphosphate (DMAPP). Finally the farnesyl diphosphate synthase ERG20 catalyzes the sequential condensation of isopentenyl pyrophosphate with dimethylallyl pyrophosphate, and then with the resultant geranylpyrophosphate to the ultimate product farnesyl pyrophosphate. The protein is Diphosphomevalonate decarboxylase of Eremothecium gossypii (strain ATCC 10895 / CBS 109.51 / FGSC 9923 / NRRL Y-1056) (Yeast).